The sequence spans 175 residues: uncharacterized protein (175 aa).

This is an uncharacterized protein from Human cytomegalovirus (strain AD169) (HHV-5).